The sequence spans 107 residues: Stellacyanin (107 aa).

Residues 1–105 enclose the Phytocyanin domain; the sequence is TVYTVGDSAG…GQKVHINVTV (105 aa). N-linked (GlcNAc...) asparagine glycosylation occurs at N28. Residue H46 participates in Cu cation binding. A disulfide bridge links C59 with C93. N-linked (GlcNAc...) asparagine glycosylation occurs at N60. Cu cation is bound by residues C87, H92, and Q97. N102 is a glycosylation site (N-linked (GlcNAc...) asparagine).

The chain is Stellacyanin from Toxicodendron vernicifluum (Japanese lacquer tree).